Consider the following 265-residue polypeptide: Undecaprenyl-diphosphatase (265 aa).

8 consecutive transmembrane segments (helical) span residues 15–37, 41–61, 85–105, 109–129, 144–164, 183–203, 218–238, and 244–264; these read GLTE…LLEY, KAES…VFLY, YLLA…HSFI, LFGP…ILAV, VSPA…WPGF, LAAE…TGYD, FWAV…KGFI, and VTFR…LLFW.

The protein belongs to the UppP family.

Its subcellular location is the cell inner membrane. The catalysed reaction is di-trans,octa-cis-undecaprenyl diphosphate + H2O = di-trans,octa-cis-undecaprenyl phosphate + phosphate + H(+). Its function is as follows. Catalyzes the dephosphorylation of undecaprenyl diphosphate (UPP). Confers resistance to bacitracin. In Oleidesulfovibrio alaskensis (strain ATCC BAA-1058 / DSM 17464 / G20) (Desulfovibrio alaskensis), this protein is Undecaprenyl-diphosphatase.